The sequence spans 396 residues: Acetate kinase (396 aa).

Asparagine 8 contacts Mg(2+). An ATP-binding site is contributed by lysine 15. Position 89 (arginine 89) interacts with substrate. The active-site Proton donor/acceptor is the aspartate 146. ATP contacts are provided by residues 206 to 210, 283 to 285, and 331 to 335; these read HIGNG, DMR, and GVGEN. A Mg(2+)-binding site is contributed by glutamate 383.

The protein belongs to the acetokinase family. As to quaternary structure, homodimer. Mg(2+) serves as cofactor. It depends on Mn(2+) as a cofactor.

Its subcellular location is the cytoplasm. It carries out the reaction acetate + ATP = acetyl phosphate + ADP. Its pathway is metabolic intermediate biosynthesis; acetyl-CoA biosynthesis; acetyl-CoA from acetate: step 1/2. Catalyzes the formation of acetyl phosphate from acetate and ATP. Can also catalyze the reverse reaction. This chain is Acetate kinase, found in Streptococcus pneumoniae (strain 70585).